A 259-amino-acid chain; its full sequence is Histidinol-phosphatase (259 aa).

Mg(2+)-binding residues include Glu66, Asp82, Ile84, Asp85, and Asp207. Substrate is bound at residue Glu66. Substrate is bound by residues 84 to 87 (IDGT) and Asp207.

It belongs to the inositol monophosphatase superfamily. It depends on Mg(2+) as a cofactor.

It carries out the reaction L-histidinol phosphate + H2O = L-histidinol + phosphate. Its pathway is amino-acid biosynthesis; L-histidine biosynthesis; L-histidine from 5-phospho-alpha-D-ribose 1-diphosphate: step 8/9. In terms of biological role, catalyzes the dephosphorylation of histidinol-phosphate to histidinol, the direct precursor of histidine. This chain is Histidinol-phosphatase (hisN), found in Chlorobaculum parvum (strain DSM 263 / NCIMB 8327) (Chlorobium vibrioforme subsp. thiosulfatophilum).